The chain runs to 664 residues: Translation factor guf1, mitochondrial (664 aa).

Residues methionine 1 to alanine 43 constitute a mitochondrion transit peptide. A tr-type G domain is found at glutamate 66–isoleucine 246. Residues alanine 75–serine 82, aspartate 139–histidine 143, and asparagine 193–aspartate 196 each bind GTP.

This sequence belongs to the TRAFAC class translation factor GTPase superfamily. Classic translation factor GTPase family. LepA subfamily.

It is found in the mitochondrion inner membrane. It catalyses the reaction GTP + H2O = GDP + phosphate + H(+). Functionally, promotes mitochondrial protein synthesis. May act as a fidelity factor of the translation reaction, by catalyzing a one-codon backward translocation of tRNAs on improperly translocated ribosomes. Binds to mitochondrial ribosomes in a GTP-dependent manner. This chain is Translation factor guf1, mitochondrial (guf1), found in Aspergillus clavatus (strain ATCC 1007 / CBS 513.65 / DSM 816 / NCTC 3887 / NRRL 1 / QM 1276 / 107).